The primary structure comprises 237 residues: ATP synthase subunit 4, mitochondrial (237 aa).

Residues M1–Y30 constitute a mitochondrion transit peptide.

The protein belongs to the eukaryotic ATPase B chain family.

The protein resides in the mitochondrion. It localises to the mitochondrion inner membrane. In terms of biological role, mitochondrial membrane ATP synthase (F(1)F(0) ATP synthase or Complex V) produces ATP from ADP in the presence of a proton gradient across the membrane which is generated by electron transport complexes of the respiratory chain. F-type ATPases consist of two structural domains, F(1) - containing the extramembraneous catalytic core, and F(0) - containing the membrane proton channel, linked together by a central stalk and a peripheral stalk. During catalysis, ATP synthesis in the catalytic domain of F(1) is coupled via a rotary mechanism of the central stalk subunits to proton translocation. Part of the complex F(0) domain and the peripheric stalk, which acts as a stator to hold the catalytic alpha(3)beta(3) subcomplex and subunit a/ATP6 static relative to the rotary elements. The chain is ATP synthase subunit 4, mitochondrial (ATP4) from Kluyveromyces lactis (strain ATCC 8585 / CBS 2359 / DSM 70799 / NBRC 1267 / NRRL Y-1140 / WM37) (Yeast).